Consider the following 169-residue polypeptide: MQDVCNSQEILQDYAMELDRADVALLNAVQKNNRLTSEELADKVGLSPTACQRRLKRLRSLGVIEADVSIVSPKAVGRPVTMIVMVSLERERADIVDRFKSSIRNTREVMIGYYVTGDADFILIVTAKDMEEYEEFTRRFFYENHDIKGFKTMVVMDRVKATFAVPIEI.

An HTH asnC-type domain is found at 18–79 (LDRADVALLN…IVSPKAVGRP (62 aa)). A DNA-binding region (H-T-H motif) is located at residues 37–56 (SEELADKVGLSPTACQRRLK).

This is an uncharacterized protein from Sinorhizobium fredii (strain NBRC 101917 / NGR234).